Reading from the N-terminus, the 547-residue chain is Leiomodin-2 (547 aa).

Residues 1-47 (MSTFGYRRGLSKYESIDEDELLASLSAEELKELERELEDIEPDRNLP) are interaction with tropomyosin alpha. Interaction with actin stretches follow at residues 1–161 (MSTF…SDNS), 162–497 (KPKI…KEIK), and 521–540 (AHENLMEAIRGSSIKQLKRV). 3 positions are modified to phosphoserine: Ser-11, Ser-15, and Ser-24. The stretch at 16–41 (IDEDELLASLSAEELKELERELEDIE) forms a coiled coil. Disordered regions lie at residues 91 to 162 (KVAE…DNSK) and 352 to 533 (MDKQ…RGSS). Composition is skewed to acidic residues over residues 95–104 (DKEESEEELI) and 112–139 (VSEEVYTEEEEEESQEEEEEEDSDEEER). The stretch at 113–148 (SEEVYTEEEEEESQEEEEEEDSDEEERTIETAKGIN) forms a coiled coil. Over residues 149 to 160 (GTVNYDSVNSDN) the composition is skewed to polar residues. The span at 352–367 (MDKQRQKRLQEQKQQE) shows a compositional bias: basic and acidic residues. Ser-400 is modified (phosphoserine). The span at 419–449 (ATPPPPPPPPPPPPPSSQRLPPPPPPPPPPL) shows a compositional bias: pro residues. Over residues 465-475 (QQESAQRALQN) the composition is skewed to polar residues. Basic residues predominate over residues 477–487 (QKKKKGKKVKK). Positions 494–512 (KEIKNSLRSVQEKKMEDSS) are enriched in basic and acidic residues. Positions 521 to 540 (AHENLMEAIRGSSIKQLKRV) constitute a WH2 domain.

The protein belongs to the tropomodulin family. In terms of assembly, can bind at least three actin monomers and thereby provides a nucleus for actin filament formation. Interacts (via N-terminus) with tropomyosin alpha (TPM1) (via N-terminus). May also interact with TPM2 (via N-terminus). Interacts with FLII. Specifically expressed in heart and skeletal muscles, with higher levels in heart (at protein level). Not expressed in other tissues.

The protein resides in the cytoplasm. It is found in the myofibril. It localises to the sarcomere. Its subcellular location is the m line. The protein localises to the cytoskeleton. Its function is as follows. Mediates nucleation of actin filaments and thereby promotes actin polymerization. Plays a role in the regulation of actin filament length. Required for normal sarcomere organization in the heart, and for normal heart function. The protein is Leiomodin-2 (LMOD2) of Homo sapiens (Human).